The primary structure comprises 354 residues: tRNA N6-adenosine threonylcarbamoyltransferase (354 aa).

2 residues coordinate Fe cation: H115 and H119. Substrate contacts are provided by residues 138–142 (LVSGG), D171, G184, and N276. Position 304 (D304) interacts with Fe cation.

Belongs to the KAE1 / TsaD family. Fe(2+) serves as cofactor.

It is found in the cytoplasm. The enzyme catalyses L-threonylcarbamoyladenylate + adenosine(37) in tRNA = N(6)-L-threonylcarbamoyladenosine(37) in tRNA + AMP + H(+). In terms of biological role, required for the formation of a threonylcarbamoyl group on adenosine at position 37 (t(6)A37) in tRNAs that read codons beginning with adenine. Is involved in the transfer of the threonylcarbamoyl moiety of threonylcarbamoyl-AMP (TC-AMP) to the N6 group of A37, together with TsaE and TsaB. TsaD likely plays a direct catalytic role in this reaction. This chain is tRNA N6-adenosine threonylcarbamoyltransferase, found in Xanthomonas oryzae pv. oryzae (strain MAFF 311018).